Reading from the N-terminus, the 519-residue chain is Probable anion transporter 3, chloroplastic (519 aa).

The N-terminal 76 residues, 1-76, are a transit peptide targeting the chloroplast; sequence MAPPGQLLPL…PPPPATSLPG (76 aa). Pro residues predominate over residues 56-72; sequence LPFAPPRRLSRPPPPAT. Positions 56 to 82 are disordered; sequence LPFAPPRRLSRPPPPATSLPGASPGGG. A run of 12 helical transmembrane segments spans residues 100–120, 138–158, 166–186, 188–208, 229–249, 253–273, 326–346, 362–382, 403–423, 424–444, 460–480, and 488–508; these read VAAMLGLALALCNADRVVMSV, VVQSSFLWGYLVSPIIGGALV, VMAYGVALWSLATFLSPWAAA, SLWLFLSTRVLLGMAEGVALP, IAMAGFQLGNTIGLLLSPIIM, GIFGPFVIFGLFGFLWVLVWI, WALISANAMHSWGYFVILSWM, AWFSALPWVMMAVLGYVAGVV, IGFVGPGVALLGLNAAKSPVI, ASAWLTIAVGLKSFGHSGFLV, MSNTAGTFAAILGTVGAGFFV, and GFLILTSLLYFSSTLFWDIFA.

It belongs to the major facilitator superfamily. Sodium/anion cotransporter (TC 2.A.1.14) family.

The protein resides in the plastid. Its subcellular location is the chloroplast membrane. In terms of biological role, probable anion transporter. This Oryza sativa subsp. japonica (Rice) protein is Probable anion transporter 3, chloroplastic (PHT4;3).